The primary structure comprises 132 residues: Histone H2A.2 (132 aa).

This sequence belongs to the histone H2A family. In terms of assembly, the nucleosome is a histone octamer containing two molecules each of H2A, H2B, H3 and H4 assembled in one H3-H4 heterotetramer and two H2A-H2B heterodimers. The octamer wraps approximately 147 bp of DNA.

It localises to the nucleus. The protein resides in the chromosome. Core component of nucleosome. Nucleosomes wrap and compact DNA into chromatin, limiting DNA accessibility to the cellular machineries which require DNA as a template. Histones thereby play a central role in transcription regulation, DNA repair, DNA replication and chromosomal stability. DNA accessibility is regulated via a complex set of post-translational modifications of histones, also called histone code, and nucleosome remodeling. This Leishmania infantum protein is Histone H2A.2.